The sequence spans 366 residues: 3-isopropylmalate dehydrogenase (366 aa).

An NAD(+)-binding site is contributed by 78 to 91 (GPQWTHLKGSESPE). Arginine 99, arginine 109, arginine 138, and aspartate 227 together coordinate substrate. Residues aspartate 227, aspartate 251, and aspartate 255 each coordinate Mg(2+). Residue 285–297 (GSAPDIAEKNIAN) coordinates NAD(+).

This sequence belongs to the isocitrate and isopropylmalate dehydrogenases family. LeuB type 1 subfamily. As to quaternary structure, homodimer. Mg(2+) serves as cofactor. The cofactor is Mn(2+).

The protein resides in the cytoplasm. It carries out the reaction (2R,3S)-3-isopropylmalate + NAD(+) = 4-methyl-2-oxopentanoate + CO2 + NADH. It participates in amino-acid biosynthesis; L-leucine biosynthesis; L-leucine from 3-methyl-2-oxobutanoate: step 3/4. Functionally, catalyzes the oxidation of 3-carboxy-2-hydroxy-4-methylpentanoate (3-isopropylmalate) to 3-carboxy-4-methyl-2-oxopentanoate. The product decarboxylates to 4-methyl-2 oxopentanoate. This Blochmanniella pennsylvanica (strain BPEN) protein is 3-isopropylmalate dehydrogenase.